Here is a 265-residue protein sequence, read N- to C-terminus: Hydroxyethylthiazole kinase 2 (265 aa).

Met39 provides a ligand contact to substrate. Lys115 and Thr168 together coordinate ATP. Gly195 provides a ligand contact to substrate.

The protein belongs to the Thz kinase family. It depends on Mg(2+) as a cofactor.

The catalysed reaction is 5-(2-hydroxyethyl)-4-methylthiazole + ATP = 4-methyl-5-(2-phosphooxyethyl)-thiazole + ADP + H(+). Its pathway is cofactor biosynthesis; thiamine diphosphate biosynthesis; 4-methyl-5-(2-phosphoethyl)-thiazole from 5-(2-hydroxyethyl)-4-methylthiazole: step 1/1. Catalyzes the phosphorylation of the hydroxyl group of 4-methyl-5-beta-hydroxyethylthiazole (THZ). The polypeptide is Hydroxyethylthiazole kinase 2 (Clostridium botulinum (strain 657 / Type Ba4)).